A 342-amino-acid chain; its full sequence is Phenylalanine--tRNA ligase alpha subunit (342 aa).

Glutamate 257 contributes to the Mg(2+) binding site.

The protein belongs to the class-II aminoacyl-tRNA synthetase family. Phe-tRNA synthetase alpha subunit type 1 subfamily. As to quaternary structure, tetramer of two alpha and two beta subunits. Mg(2+) is required as a cofactor.

Its subcellular location is the cytoplasm. It carries out the reaction tRNA(Phe) + L-phenylalanine + ATP = L-phenylalanyl-tRNA(Phe) + AMP + diphosphate + H(+). The protein is Phenylalanine--tRNA ligase alpha subunit of Chlamydia trachomatis serovar A (strain ATCC VR-571B / DSM 19440 / HAR-13).